The sequence spans 590 residues: uncharacterized protein (590 aa).

Over 1-68 (MKFSKPKFSM…SQRVWGPWNY (68 aa)) the chain is Cytoplasmic. A helical membrane pass occupies residues 69–89 (VAFWLADSVNVNTWMIAGTAV). Topologically, residues 90–94 (ESGLS) are extracellular. A helical transmembrane segment spans residues 95 to 115 (WWEAWITVWVGYTIAAFILTI). The Cytoplasmic portion of the chain corresponds to 116 to 124 (AGRAGAVYH). A helical transmembrane segment spans residues 125-145 (ISFPVLSRSSFGIWGSLWPIL). The Extracellular segment spans residues 146–149 (NRAV). A helical transmembrane segment spans residues 150–170 (MACVWYGVQAWIGGECVTLMI). Topologically, residues 171–194 (RSIWPSFSHIPNTMAKSGTETYQW) are cytoplasmic. Residues 195–215 (VGFFIFWLISNVAIWFPVYQI) form a helical membrane-spanning segment. The Extracellular portion of the chain corresponds to 216–218 (RHL). Residues 219–239 (FTAKSFLAPPAAIAFLIWALV) traverse the membrane as a helical segment. The Cytoplasmic portion of the chain corresponds to 240 to 258 (KAHGAGDAIHAKTQLSTWN). The helical transmembrane segment at 259-279 (HGWAVTAGIISCLDNFATLIV) threads the bilayer. Topologically, residues 280-298 (NNPDFTRFATTPNAPIFPQ) are extracellular. A helical membrane pass occupies residues 299 to 319 (LITIPMGFGITTLIGVLVGSA). Over 320-390 (SKSIYGENIW…LCPMFINIRR (71 aa)) the chain is Cytoplasmic. The helical transmembrane segment at 391–411 (GGYIASIIGICMCPWNLLSSS) threads the bilayer. At 412-418 (NSFANSL) the chain is on the extracellular side. Residues 419–439 (SAYAVFLSSFAGILIADYFVI) form a helical membrane-spanning segment. The Cytoplasmic portion of the chain corresponds to 440 to 467 (RKGYLKVDALYTINPNEPYWFTYGINLR). Residues 468 to 488 (AFASYICGLLINVVGLAGAVG) form a helical membrane-spanning segment. Over 489-500 (DKVPKAALTMNN) the chain is Extracellular. Residues 501–521 (IAYLLGIVTSFLSHLIICKIF) form a helical membrane-spanning segment. Residues 522–590 (PVTACGEKFL…GIDIKESSVF (69 aa)) are Cytoplasmic-facing. The tract at residues 566–590 (VSYDSKEKSDDGKSGGIDIKESSVF) is disordered.

This sequence belongs to the purine-cytosine permease (2.A.39) family.

Its subcellular location is the cytoplasm. It is found in the nucleus. The protein resides in the membrane. This is an uncharacterized protein from Schizosaccharomyces pombe (strain 972 / ATCC 24843) (Fission yeast).